Here is a 437-residue protein sequence, read N- to C-terminus: Immunoglobulin superfamily member 11 (437 aa).

The first 22 residues, 1-22, serve as a signal peptide directing secretion; the sequence is MTCRGSPLAPLLLFSLHGVAAS. Positions 23–136 constitute an Ig-like V-type domain; it reads LEVSESPGSV…DRGGRNIGVT (114 aa). The Extracellular portion of the chain corresponds to 23–241; the sequence is LEVSESPGSV…VISPQPRSIG (219 aa). 2 cysteine pairs are disulfide-bonded: Cys44–Cys120 and Cys165–Cys215. Asn102 carries N-linked (GlcNAc...) asparagine glycosylation. Residues 144–234 enclose the Ig-like C2-type domain; the sequence is PSAPHCQIQG…TCLLDLQVIS (91 aa). The chain crosses the membrane as a helical span at residues 242–262; it reads LIAGAIGTGAVIIIFCIALIL. Residues 263–437 are Cytoplasmic-facing; that stretch reads GAFFYWRSKN…PAQSRAGSLV (175 aa). Arg379 bears the Omega-N-methylarginine mark. Residues 382 to 405 form a disordered region; it reads SLPAVSRSNGSVSRKARPPPVPSL.

In terms of processing, N-glycosylated.

The protein resides in the cell membrane. Functionally, functions as a cell adhesion molecule through homophilic interaction. Stimulates cell growth. This Bos taurus (Bovine) protein is Immunoglobulin superfamily member 11 (IGSF11).